Reading from the N-terminus, the 239-residue chain is Probable 2-phosphosulfolactate phosphatase (239 aa).

The protein belongs to the ComB family. Mg(2+) is required as a cofactor.

The catalysed reaction is (2R)-O-phospho-3-sulfolactate + H2O = (2R)-3-sulfolactate + phosphate. The polypeptide is Probable 2-phosphosulfolactate phosphatase (Clostridium botulinum (strain Kyoto / Type A2)).